The chain runs to 323 residues: Phosphate acyltransferase (323 aa).

The protein belongs to the PlsX family. As to quaternary structure, homodimer. Probably interacts with PlsY.

It is found in the cytoplasm. It catalyses the reaction a fatty acyl-[ACP] + phosphate = an acyl phosphate + holo-[ACP]. The protein operates within lipid metabolism; phospholipid metabolism. Functionally, catalyzes the reversible formation of acyl-phosphate (acyl-PO(4)) from acyl-[acyl-carrier-protein] (acyl-ACP). This enzyme utilizes acyl-ACP as fatty acyl donor, but not acyl-CoA. The chain is Phosphate acyltransferase from Finegoldia magna (strain ATCC 29328 / DSM 20472 / WAL 2508) (Peptostreptococcus magnus).